The following is a 436-amino-acid chain: Probable 4-aminobutyrate aminotransferase (436 aa).

The residue at position 281 (Lys-281) is an N6-(pyridoxal phosphate)lysine.

It belongs to the class-III pyridoxal-phosphate-dependent aminotransferase family. Pyridoxal 5'-phosphate serves as cofactor.

It catalyses the reaction 4-aminobutanoate + 2-oxoglutarate = succinate semialdehyde + L-glutamate. The catalysed reaction is (S)-3-amino-2-methylpropanoate + 2-oxoglutarate = 2-methyl-3-oxopropanoate + L-glutamate. It functions in the pathway amino-acid degradation; 4-aminobutanoate degradation. This is Probable 4-aminobutyrate aminotransferase (gabT) from Bacillus subtilis (strain 168).